Reading from the N-terminus, the 159-residue chain is Ribosomal RNA large subunit methyltransferase H (159 aa).

S-adenosyl-L-methionine-binding positions include Leu76, Gly108, and 127–132; that span reads FSKMTF.

The protein belongs to the RNA methyltransferase RlmH family. As to quaternary structure, homodimer.

It is found in the cytoplasm. The catalysed reaction is pseudouridine(1915) in 23S rRNA + S-adenosyl-L-methionine = N(3)-methylpseudouridine(1915) in 23S rRNA + S-adenosyl-L-homocysteine + H(+). In terms of biological role, specifically methylates the pseudouridine at position 1915 (m3Psi1915) in 23S rRNA. This chain is Ribosomal RNA large subunit methyltransferase H, found in Geobacillus sp. (strain WCH70).